We begin with the raw amino-acid sequence, 157 residues long: Protein FAM219A (157 aa).

Methionine 1 carries the post-translational modification N-acetylmethionine. The tract at residues 1–103 is disordered; that stretch reads MMEEIDRFQD…SRYSSSGYSS (103 aa). Basic and acidic residues predominate over residues 17 to 33; sequence SDRDCDAREEKQRELAR. Positions 38-52 are enriched in polar residues; the sequence is KNGSMGSPVNQQPKK. Phosphoserine occurs at positions 44 and 74. At threonine 85 the chain carries Phosphothreonine. 2 positions are modified to phosphoserine: serine 87 and serine 94. The span at 94 to 103 shows a compositional bias: low complexity; it reads SRYSSSGYSS.

This sequence belongs to the FAM219 family.

The polypeptide is Protein FAM219A (Fam219a) (Mus musculus (Mouse)).